Reading from the N-terminus, the 165-residue chain is Protein-export protein SecB (165 aa).

It belongs to the SecB family. As to quaternary structure, homotetramer, a dimer of dimers. One homotetramer interacts with 1 SecA dimer.

Its subcellular location is the cytoplasm. One of the proteins required for the normal export of preproteins out of the cell cytoplasm. It is a molecular chaperone that binds to a subset of precursor proteins, maintaining them in a translocation-competent state. It also specifically binds to its receptor SecA. This chain is Protein-export protein SecB, found in Colwellia psychrerythraea (strain 34H / ATCC BAA-681) (Vibrio psychroerythus).